A 163-amino-acid polypeptide reads, in one-letter code: Troponin C, skeletal muscle (163 aa).

A2 bears the Blocked amino end (Ala) mark. EF-hand domains lie at 18–53 (EMIAEFKAAFDMFDADGGGDISTKELGTVMRMLGQN), 54–89 (PTKEELDAIIEEVDEDGSGTIDFEEFLVMMVRQMKE), 94–129 (KSEEELANCFRIFDKNADGFIDIEELGEILRATGEH), and 130–163 (VTEEDIEDLMKDSDKNNDGRIDFDEFLKMMEGVQ). 18 residues coordinate Ca(2+): D31, D33, D37, E42, D67, D69, S71, T73, E78, D107, N109, D111, E118, D143, N145, D147, R149, and E154.

It belongs to the troponin C family.

Troponin is the central regulatory protein of striated muscle contraction. Tn consists of three components: Tn-I which is the inhibitor of actomyosin ATPase, Tn-T which contains the binding site for tropomyosin and Tn-C. The binding of calcium to Tn-C abolishes the inhibitory action of Tn on actin filaments. The protein is Troponin C, skeletal muscle (TNNC2) of Gallus gallus (Chicken).